We begin with the raw amino-acid sequence, 363 residues long: Protein-arginine kinase (363 aa).

In terms of domain architecture, Phosphagen kinase C-terminal spans 24-255 (IVLSSRIRLA…QQLIAQERAA (232 aa)). Residues 27-31 (SSRIR), H92, R126, 177-181 (RASVM), and 208-213 (RGTYGE) contribute to the ATP site. The short motif at 338-343 (RDVRRA) is the RDXXRA motif of the pArg binding pocket involved in allosteric regulation element.

Belongs to the ATP:guanido phosphotransferase family.

The catalysed reaction is L-arginyl-[protein] + ATP = N(omega)-phospho-L-arginyl-[protein] + ADP + H(+). Appears to be allosterically activated by the binding of pArg-containing polypeptides to the pArg-binding pocket localized in the C-terminal domain of McsB. Its function is as follows. Catalyzes the specific phosphorylation of arginine residues in a large number of proteins. Is part of the bacterial stress response system. Protein arginine phosphorylation has a physiologically important role and is involved in the regulation of many critical cellular processes, such as protein homeostasis, motility, competence, and stringent and stress responses, by regulating gene expression and protein activity. This Geobacillus kaustophilus (strain HTA426) protein is Protein-arginine kinase.